A 555-amino-acid polypeptide reads, in one-letter code: Formate--tetrahydrofolate ligase (555 aa).

64–71 (TKAGIGKT) contributes to the ATP binding site.

The protein belongs to the formate--tetrahydrofolate ligase family.

The catalysed reaction is (6S)-5,6,7,8-tetrahydrofolate + formate + ATP = (6R)-10-formyltetrahydrofolate + ADP + phosphate. The protein operates within one-carbon metabolism; tetrahydrofolate interconversion. The protein is Formate--tetrahydrofolate ligase of Bacteroides thetaiotaomicron (strain ATCC 29148 / DSM 2079 / JCM 5827 / CCUG 10774 / NCTC 10582 / VPI-5482 / E50).